The chain runs to 425 residues: Tyrosine--tRNA ligase (425 aa).

Y34 lines the L-tyrosine pocket. The short motif at P39–N48 is the 'HIGH' region element. L-tyrosine-binding residues include Y171 and Q175. A 'KMSKS' region motif is present at residues K231–S235. K234 is a binding site for ATP. Positions A358–I424 constitute an S4 RNA-binding domain.

It belongs to the class-I aminoacyl-tRNA synthetase family. TyrS type 1 subfamily. As to quaternary structure, homodimer.

Its subcellular location is the cytoplasm. The catalysed reaction is tRNA(Tyr) + L-tyrosine + ATP = L-tyrosyl-tRNA(Tyr) + AMP + diphosphate + H(+). In terms of biological role, catalyzes the attachment of tyrosine to tRNA(Tyr) in a two-step reaction: tyrosine is first activated by ATP to form Tyr-AMP and then transferred to the acceptor end of tRNA(Tyr). In Opitutus terrae (strain DSM 11246 / JCM 15787 / PB90-1), this protein is Tyrosine--tRNA ligase.